The primary structure comprises 448 residues: Probable D-serine dehydratase (448 aa).

Lysine 119 bears the N6-(pyridoxal phosphate)lysine mark.

Belongs to the serine/threonine dehydratase family. DsdA subfamily. Requires pyridoxal 5'-phosphate as cofactor.

The catalysed reaction is D-serine = pyruvate + NH4(+). The chain is Probable D-serine dehydratase from Pseudomonas aeruginosa (strain UCBPP-PA14).